The following is a 156-amino-acid chain: Low molecular weight protein-tyrosine-phosphatase YfkJ (156 aa).

The Nucleophile role is filled by C8. R14 is an active-site residue. The Proton donor role is filled by D125.

It belongs to the low molecular weight phosphotyrosine protein phosphatase family.

The catalysed reaction is O-phospho-L-tyrosyl-[protein] + H2O = L-tyrosyl-[protein] + phosphate. With respect to regulation, efficiently inhibited by Cu(2+) ion, Zn(2+) ion and N-ethylmaleimide, while the addition of Mg(2+), Ca(2+) or Fe(3+) ions has minimal effect. Inhibited in a competitive manner by vanadate. Its function is as follows. Dephosphorylates the phosphotyrosine-containing proteins. Involved in ethanol stress resistance. This Bacillus subtilis (strain 168) protein is Low molecular weight protein-tyrosine-phosphatase YfkJ (yfkJ).